Consider the following 110-residue polypeptide: uncharacterized protein (110 aa).

It is found in the plastid. The protein localises to the chloroplast. This is an uncharacterized protein from Auxenochlorella pyrenoidosa (Freshwater green alga).